The sequence spans 130 residues: Small ribosomal subunit protein uS9 (130 aa).

It belongs to the universal ribosomal protein uS9 family.

The chain is Small ribosomal subunit protein uS9 from Shewanella denitrificans (strain OS217 / ATCC BAA-1090 / DSM 15013).